We begin with the raw amino-acid sequence, 2566 residues long: Highly reducing polyketide synthase verA (2566 aa).

The Ketosynthase family 3 (KS3) domain maps to 3-440; sequence PEPIAIIGTG…GTNAHAILES (438 aa). A disordered region spans residues 35 to 61; sequence VASEPPSTRFDNRSFYDPDPSHPGTTN. Residues 44 to 54 are compositionally biased toward basic and acidic residues; the sequence is FDNRSFYDPDP. Catalysis depends on for beta-ketoacyl synthase activity residues Cys-176, His-316, and His-360. Residues 554-880 form a malonyl-CoA:ACP transacylase (MAT) domain region; it reads IFTGQGAQWP…IGLSNRGASG (327 aa). Ser-648 functions as the For malonyltransferase activity in the catalytic mechanism. Positions 950 to 1081 are N-terminal hotdog fold; sequence HPLLGSLEAD…GKLLICWGNP (132 aa). Positions 950 to 1246 are dehydratase (DH) domain; that stretch reads HPLLGSLEAD…EGVHISPLGP (297 aa). The 301-residue stretch at 950-1250 folds into the PKS/mFAS DH domain; the sequence is HPLLGSLEAD…ISPLGPPDRQ (301 aa). His-982 serves as the catalytic Proton acceptor; for dehydratase activity. Residues 1096–1250 form a C-terminal hotdog fold region; the sequence is AGAVDIKDFY…ISPLGPPDRQ (155 aa). Asp-1156 (proton donor; for dehydratase activity) is an active-site residue. The tract at residues 1386 to 1581 is methyltransferase (CMet) domain; that stretch reads DVLSRFYKED…TGFGGIDTIT (196 aa). The interval 2127–2294 is ketoreductase (KR) domain; that stretch reads KTYLLVGMTG…RRARNIVGSI (168 aa). The Carrier domain occupies 2411-2489; that stretch reads EAAEIVAAGL…ALTADSVSKL (79 aa). Residue Ser-2449 is modified to O-(pantetheine 4'-phosphoryl)serine. A disordered region spans residues 2505-2540; that stretch reads KDVSGLTSPPEVPSDASRSSVSSGMDEIVTPESPSF. Residues 2518-2527 show a composition bias toward low complexity; the sequence is SDASRSSVSS.

The cofactor is pantetheine 4'-phosphate.

It functions in the pathway secondary metabolite biosynthesis; terpenoid biosynthesis. It participates in mycotoxin biosynthesis. In terms of biological role, highly reducing polyketide synthase (HR-PKS); part of the gene cluster that mediates the biosynthesis of the neurotoxin verrucosidin, a methylated alpha-pyrone polyketide that inhibits oxidative phosphorylation in mitochondria and thereby causes neurological diseases. The carbon backbone of verrucosidin is synthesized by the HR-PKS verA, and further modified by the other verrucodidin cluster enzymes. In Penicillium polonicum, this protein is Highly reducing polyketide synthase verA.